The following is a 491-amino-acid chain: MDIEEWEQRHAEAFYNAKEALPYLDGMFVAYNSNIDAIRHLTEEDLSKLVGFFDESDIQDRVAAYPREIAEPLDFVARLLISMREGKAAEVPAYTADIHEWLKEHLGFDYARMGGQAGIISNLLGRLGLKKVVAYVPWLSEEQAEYFTATGNILHPKVENGKVLLKPPGEAFKPGIGSKVNWILEYSKDMNVTCAGNTFKVPRDNRLIISSRPKWLRLDMDKQIYEQLDTLLPVDGAMLSGYQMIKEEYEDGSTYKDYVENSVKVIEKLKSLNPELRIHVELTSIQNRLIRKAILTEIVARHVHSLGLDTVEVANALNVLGHEELSYSVIRKGENGIMSLYQGAVQLMKDLDLERVHVHSLGFYICILAKGHPLTLKEHRDSLLFSSVLAAAQALNGNIENLAEAEAGLEVPVSSIGLEDLENFQLYCTGRKLCTPDEFEYGYVYGSEHDAILIPSKVVERPKATVGIGDTISAGAFVAMLAKIKQKHSGK.

One can recognise an ADPK domain in the interval 4-486 (EEWEQRHAEA…FVAMLAKIKQ (483 aa)). Mg(2+) is bound by residues Glu281, Glu312, and Asp470. The active-site Proton acceptor is the Asp470.

Belongs to the carbohydrate kinase PfkC family. It depends on Mg(2+) as a cofactor.

It localises to the cytoplasm. It catalyses the reaction beta-D-fructose 6-phosphate + ADP = beta-D-fructose 1,6-bisphosphate + AMP + H(+). It functions in the pathway carbohydrate degradation; glycolysis. Functionally, catalyzes the phosphorylation of fructose 6-phosphate to fructose 1,6-bisphosphate using ADP as the phosphate donor. The protein is ADP-specific phosphofructokinase of Methanosarcina acetivorans (strain ATCC 35395 / DSM 2834 / JCM 12185 / C2A).